Here is a 191-residue protein sequence, read N- to C-terminus: Programmed cell death protein 6 (191 aa).

Residue alanine 2 is modified to N-acetylalanine. 5 EF-hand domains span residues proline 23–threonine 58, proline 59–tryptophan 89, lysine 90–arginine 125, leucine 126–leucine 161, and threonine 162–valine 191. 5 residues coordinate Ca(2+): aspartate 36, aspartate 38, serine 40, valine 42, and glutamate 47. Ca(2+)-binding residues include aspartate 103, aspartate 105, serine 107, methionine 109, and glutamate 114. Mg(2+) contacts are provided by aspartate 169, aspartate 171, aspartate 173, and tryptophan 175.

As to quaternary structure, homodimer and heterodimer; heterodimerizes (via the EF-hand 5) with PEF1. Isoform 1 and isoform 2 self-associate; probably forming homodimers. Interacts with CPNE4 (via VWFA domain). Interacts with PDCD6IP; the interaction is calcium-dependent. Interacts with RBM22. Interacts with PLSCR4. Interacts with ANXA7 and TSG101. Interacts with DAPK1. Interacts with SEC31A; the interaction is calcium-dependent and promotes monoubiquitination of SEC31A. Interacts with ANXA11 (via N-terminus); the interaction is calcium-dependent. Interacts with PLSCR3 (via N-terminus); the interaction is calcium-dependent. Interacts with MCOLN1; the interaction is calcium-dependent. Interacts with KDR; the interaction is calcium-dependent. Interacts with HEBP2; the interaction is calcium-dependent. Interacts with TFG. Isoform 1: Interacts with SHISA5, leading to stabilize it. Isoform 2: Does not interact with SHISA5. Isoform 2: Does not interact with PDCD6IP, TSG101, ANXA7 and ANXA11.

It is found in the endoplasmic reticulum membrane. It localises to the cytoplasmic vesicle. The protein localises to the COPII-coated vesicle membrane. Its subcellular location is the cytoplasm. The protein resides in the nucleus. It is found in the endosome. Its function is as follows. Calcium sensor that plays a key role in processes such as endoplasmic reticulum (ER)-Golgi vesicular transport, endosomal biogenesis or membrane repair. Acts as an adapter that bridges unrelated proteins or stabilizes weak protein-protein complexes in response to calcium: calcium-binding triggers exposure of apolar surface, promoting interaction with different sets of proteins thanks to 3 different hydrophobic pockets, leading to translocation to membranes. Involved in ER-Golgi transport by promoting the association between PDCD6IP and TSG101, thereby bridging together the ESCRT-III and ESCRT-I complexes. Together with PEF1, acts as a calcium-dependent adapter for the BCR(KLHL12) complex, a complex involved in ER-Golgi transport by regulating the size of COPII coats. In response to cytosolic calcium increase, the heterodimer formed with PEF1 interacts with, and bridges together the BCR(KLHL12) complex and SEC31 (SEC31A or SEC31B), promoting monoubiquitination of SEC31 and subsequent collagen export, which is required for neural crest specification. Involved in the regulation of the distribution and function of MCOLN1 in the endosomal pathway. Promotes localization and polymerization of TFG at endoplasmic reticulum exit site. Required for T-cell receptor-, Fas-, and glucocorticoid-induced apoptosis. May mediate Ca(2+)-regulated signals along the death pathway: interaction with DAPK1 can accelerate apoptotic cell death by increasing caspase-3 activity. Its role in apoptosis may however be indirect, as suggested by knockout experiments. May inhibit KDR/VEGFR2-dependent angiogenesis; the function involves inhibition of VEGF-induced phosphorylation of the Akt signaling pathway. In case of infection by HIV-1 virus, indirectly inhibits HIV-1 production by affecting viral Gag expression and distribution. Functionally, has a lower Ca(2+) affinity than isoform 1. The protein is Programmed cell death protein 6 (PDCD6) of Homo sapiens (Human).